The following is a 449-amino-acid chain: Cyclin-B1-1 (449 aa).

2 disordered regions span residues 1-34 and 90-143; these read MATR…VAGR and AVAP…SVRK. Composition is skewed to low complexity over residues 90 to 102 and 121 to 134; these read AVAP…PAQR and EISS…RQQS.

The protein belongs to the cyclin family. Cyclin AB subfamily.

This Oryza sativa subsp. japonica (Rice) protein is Cyclin-B1-1 (CYCB1-1).